The following is a 116-amino-acid chain: POU domain, class 4, transcription factor 1 (116 aa).

In terms of domain architecture, POU-specific spans valine 1–glutamate 54. The segment at alanine 56–isoleucine 79 is disordered. The segment at residues lysine 72 to valine 116 is a DNA-binding region (homeobox).

This sequence belongs to the POU transcription factor family. Class-4 subfamily.

The protein resides in the nucleus. It is found in the cytoplasm. Multifunctional transcription factor with different regions mediating its different effects. Acts by binding (via its C-terminal domain) to sequences related to the consensus octamer motif 5'-ATGCAAAT-3' in the regulatory regions of its target genes. Regulates the expression of specific genes involved in differentiation and survival within a subset of neuronal lineages. It has been shown that activation of some of these genes requires its N-terminal domain, maybe through a neuronal-specific cofactor. This Gallus gallus (Chicken) protein is POU domain, class 4, transcription factor 1 (POU4F1).